The chain runs to 29 residues: Cyclotide mela-4 (29 aa).

Residues 1 to 29 (GKPICGETCFKGKCYTPGCTCSYPICKKN) constitute a cross-link (cyclopeptide (Gly-Asn)). 3 disulfides stabilise this stretch: C5–C19, C9–C21, and C14–C26.

This is a cyclic peptide. In terms of processing, contains 3 disulfide bonds.

Its function is as follows. Probably participates in a plant defense mechanism (Potential). Binds to and induces leakage in phospholipd membranes, particularly ones containing 1-palmitoyl-2-oleophosphatidylethanolamine (POPE). In vitro, displays cytotoxicity against cultured cells. Not active against Gram-negative bacterium E.coli ATCC 25922 or Gram-positive bacterium S.aureus ATCC 25923 up to a concentration of 64 uM. This chain is Cyclotide mela-4, found in Melicytus latifolius (Norfolk Island mahoe).